The primary structure comprises 177 residues: Large ribosomal subunit protein uL6 (177 aa).

This sequence belongs to the universal ribosomal protein uL6 family. Part of the 50S ribosomal subunit.

This protein binds to the 23S rRNA, and is important in its secondary structure. It is located near the subunit interface in the base of the L7/L12 stalk, and near the tRNA binding site of the peptidyltransferase center. The polypeptide is Large ribosomal subunit protein uL6 (Rhizobium meliloti (strain 1021) (Ensifer meliloti)).